We begin with the raw amino-acid sequence, 318 residues long: MSHFPTLHILILVIANLQIQCFAFVSQSRGFCATGPPTESLKAEYRRLSALGSQSYNPVDSESRAAITPIVIDTWFHIITGEAGTELISDEMIADQLSYLQNAYWNATISYRLQGVTRSANDTWARNEDEMAMKTVLRRGSYRTLNVYFHTDLQASPNAGARAFDIVRRELGVSQQQPTSMLGFCTLPDPSINASSPPSTYIKDGCNVLAETMPGGSLAHYNRGGTAIHEIGHWNGLLHTFEGESCSSDNEGDFIADTPQQSKPTEGCPAQKDSCPELPGFDAIHNFMDYSSDECYDSFTPDQVSRMRSMWFAMRDGK.

Positions 1–23 (MSHFPTLHILILVIANLQIQCFA) are cleaved as a signal peptide. N-linked (GlcNAc...) asparagine glycans are attached at residues N106, N121, and N193. Position 229 (H229) interacts with Zn(2+). E230 is a catalytic residue. H233 is a Zn(2+) binding site. C268 and C295 are oxidised to a cystine.

It belongs to the peptidase M43B family.

Its subcellular location is the secreted. Secreted metalloproteinase that allows assimilation of proteinaceous substrates. The chain is Extracellular metalloprotease AO090012001025 from Aspergillus oryzae (strain ATCC 42149 / RIB 40) (Yellow koji mold).